Consider the following 289-residue polypeptide: E3 ubiquitin-protein ligase MARCHF1 (289 aa).

Residues 1-66 (MLGWCEAIAR…SPTTGTAPRS (66 aa)) are responsible for low stability. The interval 13–69 (HRIPNNTRTPEISGDLADASQTSTLNEKSPGRSASRSSNISKASSPTTGTAPRSQSR) is disordered. Residues 43-58 (GRSASRSSNISKASSP) show a composition bias toward low complexity. The segment covering 59–69 (TTGTAPRSQSR) has biased composition (polar residues). Residues 72–133 (VCPSTQDICR…ELCKYDFIME (62 aa)) form an RING-CH-type zinc finger. The Zn(2+) site is built by Cys80, Cys83, Cys97, Cys99, His107, Cys110, Cys123, and Cys126. Transmembrane regions (helical) follow at residues 155-175 (IFCS…SLYV) and 197-217 (FWTK…FMYV). Positions 222 to 279 (YVQLWRRLKAYNRVIFVQNCPDTAKKLEKNFSCNVNTDIKDAVVVPVPQTGANSLPSA) are responsible for down-regulation of CD86 and MHC class II cell surface expression.

As to quaternary structure, interacts with CD83; this interaction antagonizes MARCHF1-mediated MHC II and CD86 down-regulation. Post-translationally, ubiquitinated via ubiquitin-conjugating enzyme E2 D1/UBE2D1 independently of lysines, leading to proteolytic degradation. Has a short half-life. Instability/short half-life permits rapid changes that allow efficient induction of antigen presentation once antigen presenting cells, APCs, receive maturation signals. Small changes in protein levels significantly alter the cell surface display of MHC class II proteins. As to expression, expressed in antigen presenting cells, APCs, located in lymph nodes and spleen. Also expressed in lung. Expression is high in follicular B-cells, moderate in dendritic cells and low in splenic T-cells.

It is found in the golgi apparatus. The protein resides in the trans-Golgi network membrane. Its subcellular location is the lysosome membrane. It localises to the cytoplasmic vesicle membrane. The protein localises to the late endosome membrane. It is found in the early endosome membrane. The protein resides in the cell membrane. The enzyme catalyses S-ubiquitinyl-[E2 ubiquitin-conjugating enzyme]-L-cysteine + [acceptor protein]-L-lysine = [E2 ubiquitin-conjugating enzyme]-L-cysteine + N(6)-ubiquitinyl-[acceptor protein]-L-lysine.. It participates in protein modification; protein ubiquitination. E3 ubiquitin-protein ligase that mediates ubiquitination of TFRC, CD86, FAS and MHC class II proteins, such as HLA-DR alpha and beta, and promotes their subsequent endocytosis and sorting to lysosomes via multivesicular bodies. By constitutively ubiquitinating MHC class II proteins in immature dendritic cells, down-regulates their cell surface localization thus sequestering them in the intracellular endosomal system. Also regulates insulin sensitivity by controlling surface expression of the insulin receptor subunit beta/INSR by direct ubiquitination and degradation. Its function is as follows. (Microbial infection) Plays a role in iron metabolism by regulating the levels of the transferrin receptor TFRC during human cytomegalovirus infection, subsequently contributing to a proviral effect. The polypeptide is E3 ubiquitin-protein ligase MARCHF1 (Homo sapiens (Human)).